The chain runs to 227 residues: LysM and putative peptidoglycan-binding domain-containing protein 1 (227 aa).

Ser23 and Ser33 each carry phosphoserine. The LysM domain maps to 40–84; that stretch reads LEHQLEPGDTLAGLALKYGVTMEQIKRTNRLYTNDSIFLKKTLYI. The tract at residues 95-157 is disordered; it reads NGLDSEEEEN…PSHDLSASDF (63 aa). Acidic residues predominate over residues 98 to 108; sequence DSEEEENDGEE. Ser99 is modified (phosphoserine). The span at 143-152 shows a compositional bias: polar residues; the sequence is QGTSTPSHDL. Phosphoserine occurs at positions 166, 181, 194, and 212. Residues 169 to 227 form a disordered region; it reads KKAAAQKLRKGESGVPEEDTGLYPSSPRMQQRAVLGPVPLTRTSRTQTLRDQEDEIFKL. Positions 216 to 227 are enriched in basic and acidic residues; that stretch reads TLRDQEDEIFKL.

The polypeptide is LysM and putative peptidoglycan-binding domain-containing protein 1 (Lysmd1) (Rattus norvegicus (Rat)).